The sequence spans 449 residues: Protein phosphatase fem-2 (449 aa).

Residues Glu-28–Glu-34 form an interaction with fem-1 and fem-3 region. Positions Ile-54 to Phe-56 are interaction with fem-3. Residues Gly-160–Leu-424 form the PPM-type phosphatase domain. Asp-202, Gly-203, Asp-370, and Asp-415 together coordinate Mg(2+).

The protein belongs to the PP2C family. Component of a complex containing fem-1, fem-2 and fem-3. Interacts (via N-terminus) with fem-1 and fem-3. Component of the CBC(fem-1) E3 ubiquitin-protein ligase complex, at least composed of cul-2, elc-1, tra-1, fem-1, fem-2 and fem-3; mediates the ubiquitination and subsequent proteasomal degradation of tra-1. Interacts with tra-1. Interacts with sel-10. It depends on Mg(2+) as a cofactor. Mn(2+) serves as cofactor.

The catalysed reaction is O-phospho-L-seryl-[protein] + H2O = L-seryl-[protein] + phosphate. It catalyses the reaction O-phospho-L-threonyl-[protein] + H2O = L-threonyl-[protein] + phosphate. In terms of biological role, dephosphorylates auto-phosphorylated Ca(2+)/calmodulin-dependent protein kinase unc-43/CAMKII in vitro. Involved in the regulation of sex determination. Together with fem-3, required for male sexual development by promoting the proteasomal-mediated degradation of tra-1, a transcription repressor of male-specific genes. Promotes apoptosis. In Caenorhabditis elegans, this protein is Protein phosphatase fem-2.